Here is a 1114-residue protein sequence, read N- to C-terminus: OTU domain-containing protein 4 (1114 aa).

Residue Met1 is modified to N-acetylmethionine. Residues 1–22 form a disordered region; it reads MEAAVGVPDGGDQGGAGPREDA. Residues 8–17 are compositionally biased toward gly residues; it reads PDGGDQGGAG. The 122-residue stretch at 34–155 folds into the OTU domain; that stretch reads LYRKLVAKDG…GNHYDIVYPI (122 aa). A cys-loop region spans residues 39-45; sequence VAKDGSC. The active site involves Asp42. Cys45 serves as the catalytic Nucleophile. Positions 94–104 are variable-loop; it reads LENPQEWVGQV. At Tyr120 the chain carries Phosphotyrosine. 2 positions are modified to phosphoserine: Ser126 and Ser128. Phosphothreonine is present on Thr131. The tract at residues 143–148 is his-loop; it reads FSNGNH. His148 is a catalytic residue. Ser166, Ser199, Ser202, Ser204, and Ser341 each carry phosphoserine. Residues 323–449 form a disordered region; that stretch reads KHTSKNLKAP…FGLSPEERRE (127 aa). Over residues 392–404 the composition is skewed to low complexity; sequence FSSHSSGSQSQKF. Positions 420 to 435 are enriched in basic and acidic residues; it reads RKPDRERVEDFDHTSR. Position 439 is a phosphotyrosine (Tyr439). Ser443 bears the Phosphoserine mark. The residue at position 460 (Tyr460) is a Phosphotyrosine. Residues 472–567 form a disordered region; it reads ALSSSSVNQS…PAEQKPAEHV (96 aa). Positions 474–487 are enriched in low complexity; sequence SSSSVNQSASQSSN. Residues 496–529 are compositionally biased toward basic and acidic residues; it reads HVGDRKGSRRRMDTEERKDKDSIHGHSQLDKRPE. Residues Ser546, Ser893, and Ser900 each carry the phosphoserine modification. The tract at residues 911 to 1114 is disordered; that stretch reads EFPEARGEHV…MGDGHRGQHT (204 aa). Composition is skewed to basic and acidic residues over residues 913–922 and 969–1000; these read PEARGEHVHS and NRERETVPVELEPKRTIQSLKEKTEKVKDPKT. Ser1006, Ser1011, Ser1014, Ser1023, and Ser1024 each carry phosphoserine. A compositionally biased stretch (polar residues) spans 1039–1048; sequence SKQFYNQTYG. Residue Ser1049 is modified to Phosphoserine. Composition is skewed to basic and acidic residues over residues 1067–1086 and 1096–1114; these read VRSEESWKGQPSRSRDEGYQ and FRGDRRRSGMGDGHRGQHT.

Interacts with MYD88; the interaction is direct. Interacts with ALKBH3; the interaction is direct. Interacts with USP7; the interaction is direct. Interacts with USP9X; the interaction is direct. Post-translationally, phosphorylated on Ser-202 and Ser-204 likely by CSNK2A1-CSNK2A2 serine/threonine-protein kinase complex. Activates 'Lys-63'-specific deubiquitinase activity.

Its subcellular location is the cytoplasm. It localises to the nucleus. The catalysed reaction is Thiol-dependent hydrolysis of ester, thioester, amide, peptide and isopeptide bonds formed by the C-terminal Gly of ubiquitin (a 76-residue protein attached to proteins as an intracellular targeting signal).. Its activity is regulated as follows. Phosphorylation on Ser-202 and Ser-204 induces 'Lys-63'-specific deubiquitinase activity. Its function is as follows. Deubiquitinase which hydrolyzes the isopeptide bond between the ubiquitin C-terminus and the lysine epsilon-amino group of the target protein. May negatively regulate inflammatory and pathogen recognition signaling in innate immune response. Upon phosphorylation at Ser-202 and Ser-204 residues, via IL-1 receptor and Toll-like receptor signaling pathway, specifically deubiquitinates 'Lys-63'-polyubiquitinated MYD88 adapter protein triggering down-regulation of NF-kappa-B-dependent transcription of inflammatory mediators. Independently of the catalytic activity, acts as a scaffold for alternative deubiquitinases to assemble specific deubiquitinase-substrate complexes. Associates with USP7 and USP9X deubiquitinases to stabilize alkylation repair enzyme ALKBH3, thereby promoting the repair of alkylated DNA lesions. The protein is OTU domain-containing protein 4 of Homo sapiens (Human).